We begin with the raw amino-acid sequence, 365 residues long: Mitogen-activated protein kinase HOG1 (365 aa).

A Protein kinase domain is found at 20–306; sequence YSDLQPVGMG…ATNALAHEYL (287 aa). Residues 26–34 and lysine 49 each bind ATP; that span reads VGMGAFGLV. Catalysis depends on aspartate 148, which acts as the Proton acceptor. A TXY motif is present at residues 178-180; that stretch reads TGY.

This sequence belongs to the protein kinase superfamily. Ser/Thr protein kinase family. MAP kinase subfamily. HOG1 sub-subfamily. It depends on Mg(2+) as a cofactor.

Its subcellular location is the cytoplasm. The protein resides in the nucleus. It carries out the reaction L-seryl-[protein] + ATP = O-phospho-L-seryl-[protein] + ADP + H(+). The catalysed reaction is L-threonyl-[protein] + ATP = O-phospho-L-threonyl-[protein] + ADP + H(+). Functionally, proline-directed serine/threonine-protein kinase involved in a signal transduction pathway that is activated by changes in the osmolarity of the extracellular environment. Controls osmotic regulation of transcription of target genes. Involved in environmental stress response, hyphal growth, conidiation and possibly secondary metabolism such as ustiloxin biosynthesis or the biosynthesis of other phytotoxic compounds that are inhibitory to rice shoot growth during seed germination. Plays a key role in responses to cell wall and membrane stresses but not oxidative stress. This is Mitogen-activated protein kinase HOG1 from Ustilaginoidea virens (Rice false smut fungus).